The sequence spans 293 residues: 4-diphosphocytidyl-2-C-methyl-D-erythritol kinase (293 aa).

Lys-16 is an active-site residue. 99–109 (PMGAGLGGGSS) serves as a coordination point for ATP. Residue Asp-141 is part of the active site.

This sequence belongs to the GHMP kinase family. IspE subfamily.

It catalyses the reaction 4-CDP-2-C-methyl-D-erythritol + ATP = 4-CDP-2-C-methyl-D-erythritol 2-phosphate + ADP + H(+). It functions in the pathway isoprenoid biosynthesis; isopentenyl diphosphate biosynthesis via DXP pathway; isopentenyl diphosphate from 1-deoxy-D-xylulose 5-phosphate: step 3/6. Its function is as follows. Catalyzes the phosphorylation of the position 2 hydroxy group of 4-diphosphocytidyl-2C-methyl-D-erythritol. This is 4-diphosphocytidyl-2-C-methyl-D-erythritol kinase from Burkholderia mallei (strain NCTC 10247).